A 362-amino-acid chain; its full sequence is S-adenosylmethionine decarboxylase proenzyme (362 aa).

Active-site residues include E13 and E16. S73 serves as the catalytic Schiff-base intermediate with substrate; via pyruvic acid. S73 is subject to Pyruvic acid (Ser); by autocatalysis. The active-site Proton donor; for catalytic activity is C87. Residues S236 and H249 each act as proton acceptor; for processing activity in the active site.

The protein belongs to the eukaryotic AdoMetDC family. The cofactor is pyruvate. In terms of processing, is synthesized initially as an inactive proenzyme. Formation of the active enzyme involves a self-maturation process in which the active site pyruvoyl group is generated from an internal serine residue via an autocatalytic post-translational modification. Two non-identical subunits are generated from the proenzyme in this reaction, and the pyruvate is formed at the N-terminus of the alpha chain, which is derived from the carboxyl end of the proenzyme. The post-translation cleavage follows an unusual pathway, termed non-hydrolytic serinolysis, in which the side chain hydroxyl group of the serine supplies its oxygen atom to form the C-terminus of the beta chain, while the remainder of the serine residue undergoes an oxidative deamination to produce ammonia and the pyruvoyl group blocking the N-terminus of the alpha chain.

It catalyses the reaction S-adenosyl-L-methionine + H(+) = S-adenosyl 3-(methylsulfanyl)propylamine + CO2. It participates in amine and polyamine biosynthesis; S-adenosylmethioninamine biosynthesis; S-adenosylmethioninamine from S-adenosyl-L-methionine: step 1/1. This is S-adenosylmethionine decarboxylase proenzyme (SAMDC) from Datura stramonium (Jimsonweed).